The sequence spans 301 residues: MLELNGVPVDDTYCEAFDGIYSRIIVTAKHKWLLKKAAYSATALPSTVFGEAEGGVEKWLSPQETPDGRLGAICQIWVQKSKKFLDVLMREMGKRIRQGILVVPTTRVFNATESETKFDAEINVGRCGDGYEWEDEMWGRKVIRVPIMFGEFIIERYIGYAEGIAGGNIWYFCESEEAALEAGEAAVEALKQLDGVITSFDICSAGSKPETKYPEMGPSTNHYFCPTLKGKIPDSKVPDGVKSIPEIVINGIKREVVEKAMFVCMDVVSKIDGVVRISAGNYEGKLGQHKIYLKDLIEKYS.

This sequence belongs to the FTR family.

In Archaeoglobus fulgidus (strain ATCC 49558 / DSM 4304 / JCM 9628 / NBRC 100126 / VC-16), this protein is Formylmethanofuran--tetrahydromethanopterin formyltransferase-like protein.